The chain runs to 717 residues: Aryl hydrocarbon receptor nuclear translocator 2 (717 aa).

2 disordered regions span residues 1–20 and 35–74; these read MATP…PGSV and MAGA…IERR. R42 is modified (omega-N-methylarginine). Positions 63–73 are enriched in basic and acidic residues; the sequence is FSRENHSEIER. In terms of domain architecture, bHLH spans 63–116; the sequence is FSRENHSEIERRRRNKMTQYITELSDMVPTCSALARKPDKLTILRMAVSHMKSM. PAS domains are found at residues 134-209 and 323-393; these read TEQE…MTGR and PVCM…VKLK. The PAC domain occupies 398–441; that stretch reads SVMYRFRTKNREWMLIRTSSFTFQNPYSDEIEYIICTNTNVKQL. Residues 548–717 form a disordered region; the sequence is NDIQSSSSTG…DLGMFPPFSE (170 aa). Polar residues-rich tracts occupy residues 549 to 574 and 585 to 605; these read DIQS…QVAW and QIPS…TSHT. Over residues 610-625 the composition is skewed to low complexity; the sequence is PSSYSPLSSPATSSPS. Polar residues predominate over residues 642-651; the sequence is SGQSSGQFQG. The segment covering 658–680 has biased composition (low complexity); that stretch reads SQWQSQHHGQQSGEQHSHQQPGQ.

As to quaternary structure, efficient DNA binding requires dimerization with another bHLH protein. Heterodimer with NPAS4. Heterodimer with SIM1. Heterodimer with the aryl hydrocarbon receptor (AHR) or the SIM1 protein. Interacts with TACC3.

It localises to the nucleus. In terms of biological role, transcription factor that plays a role in the development of the hypothalamo-pituitary axis, postnatal brain growth, and visual and renal function. Specifically recognizes the xenobiotic response element (XRE). The polypeptide is Aryl hydrocarbon receptor nuclear translocator 2 (ARNT2) (Homo sapiens (Human)).